We begin with the raw amino-acid sequence, 407 residues long: Rubber oxygenase (407 aa).

The segment at residues 1 to 30 (MDGFSRRRMLMTGGALGAVGALGAATRALA) is a signal peptide (tat-type signal). His-198 contacts heme.

The protein belongs to the rubber oxygenase Lcp family. It depends on heme b as a cofactor. Post-translationally, exported by the Tat system. The position of the signal peptide cleavage has not been experimentally proven.

The protein resides in the secreted. The protein operates within biopolymer metabolism. Functionally, involved in the initial step of rubber degradation. Catalyzes the oxidative C-C cleavage of poly(cis-1,4-isoprene) in synthetic as well as in natural rubber by the addition of oxygen (O2) to the double bonds, leading to a mixture of oligonucleotide-isoprenoids with terminal keto and aldehyde groups (endo-type cleavage). The cleavage products are of different lengths, ranging from C20 (four isoprene units) to higher oligo-isoprenoids. Is not able to cleave low-molecular-weight substrate analogs with isoprenoid structure such as squalene (1,4-trans-isoprenoid), carotenoids, or alpha-tocopherol. This chain is Rubber oxygenase, found in Streptomyces sp. (strain K30).